We begin with the raw amino-acid sequence, 264 residues long: Thymidylate synthase (264 aa).

Arg21 is a dUMP binding site. Residue His51 participates in (6R)-5,10-methylene-5,6,7,8-tetrahydrofolate binding. Residue 126 to 127 (RR) participates in dUMP binding. Catalysis depends on Cys146, which acts as the Nucleophile. DUMP contacts are provided by residues 166-169 (RSAD), Asn177, and 207-209 (HLY). A (6R)-5,10-methylene-5,6,7,8-tetrahydrofolate-binding site is contributed by Asp169. Ser263 contributes to the (6R)-5,10-methylene-5,6,7,8-tetrahydrofolate binding site.

It belongs to the thymidylate synthase family. Bacterial-type ThyA subfamily. In terms of assembly, homodimer.

The protein resides in the cytoplasm. It carries out the reaction dUMP + (6R)-5,10-methylene-5,6,7,8-tetrahydrofolate = 7,8-dihydrofolate + dTMP. It functions in the pathway pyrimidine metabolism; dTTP biosynthesis. Catalyzes the reductive methylation of 2'-deoxyuridine-5'-monophosphate (dUMP) to 2'-deoxythymidine-5'-monophosphate (dTMP) while utilizing 5,10-methylenetetrahydrofolate (mTHF) as the methyl donor and reductant in the reaction, yielding dihydrofolate (DHF) as a by-product. This enzymatic reaction provides an intracellular de novo source of dTMP, an essential precursor for DNA biosynthesis. The protein is Thymidylate synthase of Laribacter hongkongensis (strain HLHK9).